The following is a 559-amino-acid chain: Glucosylglycerate phosphorylase (559 aa).

The active-site Nucleophile is the D229.

The protein belongs to the glycosyl hydrolase 13 family. Glucosylglycerate phosphorylase subfamily.

It carries out the reaction (2R)-2-O-(alpha-D-glucopyranosyl)-glycerate + phosphate = (R)-glycerate + alpha-D-glucose 1-phosphate. Catalyzes the reversible phosphorolysis of glucosylglycerate into alpha-D-glucose 1-phosphate (Glc1P) and D-glycerate (also called (R)-glycerate). May be a regulator of intracellular levels of glucosylglycerate, a compatible solute that primarily protects organisms facing salt stress and very specific nutritional constraints. Cannot catalyze the phosphorolysis of sucrose. Does not act on other sugars such as alpha-D-galactose 1-phosphate, alpha-D-mannose 1-phosphate or beta-D-glucose 1-phosphate; in vitro D-erythronate can substitute for D-glycerate with a much lower efficiency. This is Glucosylglycerate phosphorylase (ycjM) from Escherichia coli (strain K12).